The following is a 160-amino-acid chain: Lipoprotein signal peptidase (160 aa).

A run of 2 helical transmembrane segments spans residues 63-83 (YRLPFFILVSVVALGVIAVTF) and 89-109 (DQHLAAAALALIFSGALGNLI). Residues aspartate 119 and aspartate 137 contribute to the active site. A helical membrane pass occupies residues 132–152 (AFNVADSAICVGVALLAVDMI).

The protein belongs to the peptidase A8 family.

It is found in the cell inner membrane. It carries out the reaction Release of signal peptides from bacterial membrane prolipoproteins. Hydrolyzes -Xaa-Yaa-Zaa-|-(S,diacylglyceryl)Cys-, in which Xaa is hydrophobic (preferably Leu), and Yaa (Ala or Ser) and Zaa (Gly or Ala) have small, neutral side chains.. It functions in the pathway protein modification; lipoprotein biosynthesis (signal peptide cleavage). Its function is as follows. This protein specifically catalyzes the removal of signal peptides from prolipoproteins. This chain is Lipoprotein signal peptidase, found in Geobacter sulfurreducens (strain ATCC 51573 / DSM 12127 / PCA).